We begin with the raw amino-acid sequence, 1685 residues long: Phosphatidylinositol 4-phosphate 3-kinase C2 domain-containing subunit alpha (1685 aa).

Disordered regions lie at residues 1 to 33 (MAQI…EALQ) and 41 to 60 (KLQK…LSSS). N-acetylalanine is present on alanine 2. Residues 2 to 142 (AQISSNSGFK…FRPTIQRGQW (141 aa)) are interaction with clathrin; sufficient to induce clathrin assembly. The span at 19 to 31 (EPTRAKDVDKEEA) shows a compositional bias: basic and acidic residues. Over residues 49–60 (TDNQRGFELSSS) the composition is skewed to polar residues. Serine 60, serine 108, serine 259, serine 327, and serine 338 each carry phosphoserine. Positions 419-507 (NASVKVSIDI…DTEIRLQLLT (89 aa)) constitute a PI3K-RBD domain. Position 628 is a phosphoserine (serine 628). The 160-residue stretch at 680-839 (TTEQLQFTIF…ERIVLQVDFP (160 aa)) folds into the C2 PI3K-type domain. A PIK helical domain is found at 859-1035 (QHNLETLEND…EHVLGALLSV (177 aa)). Residues 1103-1381 (SIKSCSFFSS…LIESSLGSIA (279 aa)) form the PI3K/PI4K catalytic domain. Positions 1109-1115 (FFSSNAV) are G-loop. Residues 1245–1253 (GICDRHNDN) are catalytic loop. Positions 1264–1290 (HIDFGKFLGHAQMFGTFKRDRAPFVLT) are activation loop. In terms of domain architecture, PX spans 1420-1536 (GRIKEVSVFT…TFFHPLLRDE (117 aa)). The interaction with PtdIns(4,5)P2-containing membranes stretch occupies residues 1486 to 1491 (RMVLGR). Serine 1551 is modified (phosphoserine). The C2 domain occupies 1554–1677 (TPGQIGGAVK…NLSKETVKWY (124 aa)). The short motif at 1607-1618 (SKRKTKISRKTR) is the Nuclear localization signal element.

This sequence belongs to the PI3/PI4-kinase family. In terms of assembly, part of a complex with ERBB2 and EGFR. Interacts with clathrin trimers. Interacts with SBF2/MTMR13. Requires Ca(2+) as cofactor. The cofactor is Mg(2+). Phosphorylated on Ser-259 during mitosis and upon UV irradiation; which does not change enzymatic activity but leads to proteasomal degradation. Phosphorylated upon insulin stimulation; which may lead to enzyme activation.

The protein localises to the cell membrane. The protein resides in the cytoplasmic vesicle. It is found in the clathrin-coated vesicle. Its subcellular location is the nucleus. It localises to the cytoplasm. The protein localises to the golgi apparatus. The protein resides in the trans-Golgi network. It catalyses the reaction a 1,2-diacyl-sn-glycero-3-phospho-(1D-myo-inositol 4-phosphate) + ATP = a 1,2-diacyl-sn-glycero-3-phospho-(1D-myo-inositol-3,4-bisphosphate) + ADP + H(+). The enzyme catalyses a 1,2-diacyl-sn-glycero-3-phospho-(1D-myo-inositol) + ATP = a 1,2-diacyl-sn-glycero-3-phospho-(1D-myo-inositol-3-phosphate) + ADP + H(+). The catalysed reaction is a 1,2-diacyl-sn-glycero-3-phospho-(1D-myo-inositol-4,5-bisphosphate) + ATP = a 1,2-diacyl-sn-glycero-3-phospho-(1D-myo-inositol-3,4,5-trisphosphate) + ADP + H(+). With respect to regulation, only slightly inhibited by wortmannin and LY294002. Activated by clathrin and insulin. In terms of biological role, generates phosphatidylinositol 3-phosphate (PtdIns3P) and phosphatidylinositol 3,4-bisphosphate (PtdIns(3,4)P2) that act as second messengers. Has a role in several intracellular trafficking events. Functions in insulin signaling and secretion. Required for translocation of the glucose transporter SLC2A4/GLUT4 to the plasma membrane and glucose uptake in response to insulin-mediated RHOQ activation. Regulates insulin secretion through two different mechanisms: involved in glucose-induced insulin secretion downstream of insulin receptor in a pathway that involves AKT1 activation and TBC1D4/AS160 phosphorylation, and participates in the late step of insulin granule exocytosis probably in insulin granule fusion. Synthesizes PtdIns3P in response to insulin signaling. Functions in clathrin-coated endocytic vesicle formation and distribution. Regulates dynamin-independent endocytosis, probably by recruiting EEA1 to internalizing vesicles. In neurosecretory cells synthesizes PtdIns3P on large dense core vesicles. Participates in calcium induced contraction of vascular smooth muscle by regulating myosin light chain (MLC) phosphorylation through a mechanism involving Rho kinase-dependent phosphorylation of the MLCP-regulatory subunit MYPT1. May play a role in the EGF signaling cascade. May be involved in mitosis and UV-induced damage response. Required for maintenance of normal renal structure and function by supporting normal podocyte function. Involved in the regulation of ciliogenesis and trafficking of ciliary components. The protein is Phosphatidylinositol 4-phosphate 3-kinase C2 domain-containing subunit alpha (PIK3C2A) of Pongo abelii (Sumatran orangutan).